A 225-amino-acid polypeptide reads, in one-letter code: uncharacterized protein (225 aa).

The 106-residue stretch at 114 to 219 folds into the Fe2OG dioxygenase domain; the sequence is DAEAIIMQVY…RLSVTMRRII (106 aa).

The protein belongs to the iron/ascorbate-dependent oxidoreductase family.

The protein localises to the cytoplasm. It is found in the nucleus. This is an uncharacterized protein from Schizosaccharomyces pombe (strain 972 / ATCC 24843) (Fission yeast).